A 281-amino-acid polypeptide reads, in one-letter code: DSC E3 ubiquitin ligase complex subunit 4 (281 aa).

A run of 4 helical transmembrane segments spans residues Leu-22–Leu-42, Leu-62–Phe-82, Leu-84–Ile-104, and Phe-115–Ala-135. The span at His-145 to Ser-154 shows a compositional bias: polar residues. 2 disordered regions span residues His-145–Gln-183 and Asn-256–Ile-281. Over residues Asp-157 to Thr-167 the composition is skewed to acidic residues. Residues Glu-168–Gln-183 show a composition bias toward basic and acidic residues.

As to quaternary structure, component of the DSC E3 ubiquitin ligase complex composed of dsc1, dsc2, dsc3 and dsc4.

It localises to the endoplasmic reticulum membrane. Its subcellular location is the golgi apparatus membrane. The protein operates within protein modification; protein ubiquitination. Functionally, component of the DSC E3 ubiquitin ligase complex which is required for the sre1 transcriptional activator proteolytic cleavage to release the soluble transcription factor from the membrane in low oxygen or sterol conditions. The complex also plays an important role in the multivesicular body (MVB) pathway and functions in a post-endoplasmic reticulum pathway for protein degradation. The sequence is that of DSC E3 ubiquitin ligase complex subunit 4 (dsc4) from Schizosaccharomyces pombe (strain 972 / ATCC 24843) (Fission yeast).